A 271-amino-acid chain; its full sequence is 3-methyl-2-oxobutanoate hydroxymethyltransferase (271 aa).

Mg(2+) is bound by residues Asp53 and Asp92. 3-methyl-2-oxobutanoate-binding positions include 53–54, Asp92, and Lys120; that span reads DS. Glu122 is a Mg(2+) binding site. The active-site Proton acceptor is Glu189.

The protein belongs to the PanB family. Homodecamer; pentamer of dimers. The cofactor is Mg(2+).

The protein resides in the cytoplasm. The enzyme catalyses 3-methyl-2-oxobutanoate + (6R)-5,10-methylene-5,6,7,8-tetrahydrofolate + H2O = 2-dehydropantoate + (6S)-5,6,7,8-tetrahydrofolate. Its pathway is cofactor biosynthesis; (R)-pantothenate biosynthesis; (R)-pantoate from 3-methyl-2-oxobutanoate: step 1/2. In terms of biological role, catalyzes the reversible reaction in which hydroxymethyl group from 5,10-methylenetetrahydrofolate is transferred onto alpha-ketoisovalerate to form ketopantoate. This chain is 3-methyl-2-oxobutanoate hydroxymethyltransferase, found in Burkholderia multivorans (strain ATCC 17616 / 249).